The sequence spans 1832 residues: Putative transcription factor capicua (1832 aa).

A phosphoserine mark is found at Ser-41 and Ser-49. Disordered regions lie at residues 66–121 (ANQS…EVGS), 135–227 (STVG…AHPH), 323–353 (QQQQQHQQLQQQQQLQQQQQSPPQMPLNHNN), 389–427 (NQRQKQQQEEPDDQLDDDVFETTTPGISANSKKQTAAMR), 444–493 (DGAA…IRRP), 563–619 (DRRK…GGQG), 690–739 (RERV…SGGE), 784–845 (QPTG…VSAP), 874–938 (PMHH…EDDE), 1069–1105 (TSTLSSSSSNPANNEAPNKFSNFPTQHQPTTTTTISC), 1151–1178 (GQDEEEEEDEGNAEKQENPKVAGKEQVT), 1457–1602 (DGGM…STAA), 1632–1668 (QPEDCQSPSAIAVPSSPRVYGTNYRKKNTAPPPVQKL), 1701–1733 (LESSDQTGRSPRTPKTPLQSARSDASEKGHRKV), and 1789–1817 (ASCTPHSAGPNTPSDSNSSSTTLSASSTS). A compositionally biased stretch (low complexity) spans 96-121 (NANNNSSNNNTSSSNNNNNSNWEVGS). Positions 172-186 (PPPPPPASLPAPSAP) are enriched in pro residues. Composition is skewed to low complexity over residues 187–203 (PTSGSSSSHNSVGHATS), 211–223 (QQQHQQQQQHQQQ), and 323–342 (QQQQQHQQLQQQQQLQQQQQ). Positions 397-408 (EEPDDQLDDDVF) are enriched in acidic residues. A compositionally biased stretch (polar residues) spans 409–422 (ETTTPGISANSKKQ). Positions 446 to 484 (AAGAPATSAAKRRSQSLSALQQQQQQQQQAGAAGTAAGQ) are enriched in low complexity. Residues 490–558 (IRRPMNAFMI…AHFKLHPEWK (69 aa)) constitute a DNA-binding region (HMG box). The span at 610–619 (GGSGSCGGQG) shows a compositional bias: gly residues. The tract at residues 834–1832 (GSASGGGVVS…TSAADVFQYY (999 aa)) is interaction with gro. A compositionally biased stretch (basic and acidic residues) spans 903–914 (ESSEKDKPALDD). Residues 915–938 (QERDEVEEEDEDEEDDDEDDEDDE) are compositionally biased toward acidic residues. Positions 1078–1091 (NPANNEAPNKFSNF) are enriched in polar residues. Positions 1092 to 1105 (PTQHQPTTTTTISC) are enriched in low complexity. Low complexity predominate over residues 1462–1471 (GCASAAASGG). Residues 1503 to 1525 (LSQSKSESNVSFGANLGASNGQH) show a composition bias toward polar residues. The span at 1547-1589 (NSSNLSSALPTPTSSTTTPNSDEQLPLTPTTSSSNSNLNQQQP) shows a compositional bias: low complexity. Phosphothreonine is present on Thr-1716. Residues 1724–1733 (DASEKGHRKV) are compositionally biased toward basic and acidic residues. The segment covering 1789–1799 (ASCTPHSAGPN) has biased composition (polar residues). Residues 1800–1817 (TPSDSNSSSTTLSASSTS) show a composition bias toward low complexity.

In terms of assembly, interacts with gro. Expressed in the central region of embryos. Also expressed in ovarian follicle cells, the wing imaginal disks and the wing pouch.

Its subcellular location is the nucleus. Functionally, transcriptional repressor required for the specification of numerous cell types during embryonic development. Required for terminal patterning of early embryos. May associate with gro to repress tll and hkb, restricting their expression to embryonic terminal poles where they initiate correct development of head and tail structures. Required for dorsoventral patterning of oocytes and early embryos. Cooperates with dl to repress zen and other dorsal specific genes within the embryo and promotes expression of the ventralizing factor pip in ovarian follicle cells. Required during wing development for the specification of intervein areas, where it mediates localized repression of vein specific genes such as aos, dpp and vvl. The protein is Putative transcription factor capicua (cic) of Drosophila melanogaster (Fruit fly).